A 224-amino-acid polypeptide reads, in one-letter code: Ribonuclease T (224 aa).

Residues 1–11 (MSEDLYEDDLD) show a composition bias toward acidic residues. Positions 1–22 (MSEDLYEDDLDTQGSSGPRHPM) are disordered. The Exonuclease domain occupies 32 to 206 (VVVDVETGGF…YDTEKTAELF (175 aa)). Mg(2+) is bound by residues Asp-35, Glu-37, His-193, and Asp-198. Residue His-193 is the Proton donor/acceptor of the active site.

It belongs to the RNase T family. Homodimer. Mg(2+) is required as a cofactor.

Trims short 3' overhangs of a variety of RNA species, leaving a one or two nucleotide 3' overhang. Responsible for the end-turnover of tRNA: specifically removes the terminal AMP residue from uncharged tRNA (tRNA-C-C-A). Also appears to be involved in tRNA biosynthesis. The chain is Ribonuclease T from Pseudomonas putida (strain ATCC 700007 / DSM 6899 / JCM 31910 / BCRC 17059 / LMG 24140 / F1).